We begin with the raw amino-acid sequence, 55 residues long: Cytochrome c oxidase subunit 7s (55 aa).

A helical membrane pass occupies residues 13-35 (LVQDIGVALILGSIAGCFFKYGV).

Slime mold cytochrome c oxidase consists of at least seven different polypeptides species, subunits I, II, III, IV, V, VI, and VIIe/s in order of MW.

It is found in the mitochondrion inner membrane. It catalyses the reaction 4 Fe(II)-[cytochrome c] + O2 + 8 H(+)(in) = 4 Fe(III)-[cytochrome c] + 2 H2O + 4 H(+)(out). This protein is one of the nuclear-coded polypeptide chains of cytochrome c oxidase, the terminal oxidase in mitochondrial electron transport. The polypeptide is Cytochrome c oxidase subunit 7s (cxgS) (Dictyostelium discoideum (Social amoeba)).